The sequence spans 325 residues: Fatty acid synthase alpha subunit hexA (325 aa).

Mg(2+) is bound at residue Asp-209. Acetyl-CoA is bound by residues 209–211 (DLV), 255–265 (EAVFKCLHTQT), 279–282 (KSDN), and 301–303 (ISH). Residue Ser-302 participates in Mg(2+) binding.

The protein belongs to the thiolase-like superfamily. Fungal fatty acid synthetase subunit alpha family. As to quaternary structure, [Alpha(6)beta(6)] hexamers of two multifunctional subunits (alpha and beta). Post-translationally, 4'-phosphopantetheine is transferred from CoA to a specific serine of the acyl carrier domain by the C-terminal PPT domain. This modification is essential for activity because fatty acids are bound in thioester linkage to the sulfhydryl of the prosthetic group.

It catalyses the reaction acetyl-CoA + n malonyl-CoA + 2n NADPH + 4n H(+) = a long-chain-acyl-CoA + n CoA + n CO2 + 2n NADP(+).. The catalysed reaction is a fatty acyl-[ACP] + malonyl-[ACP] + H(+) = a 3-oxoacyl-[ACP] + holo-[ACP] + CO2. It carries out the reaction a (3R)-hydroxyacyl-[ACP] + NADP(+) = a 3-oxoacyl-[ACP] + NADPH + H(+). It functions in the pathway mycotoxin biosynthesis. Functionally, fatty acid synthase alpha subunit; part of the fragmented gene cluster that mediates the biosynthesis of dothistromin (DOTH), a polyketide toxin very similar in structure to the aflatoxin precursor, versicolorin B. The first step of the pathway is the conversion of acetate to norsolorinic acid (NOR) and requires the fatty acid synthase subunits hexA and hexB, as well as the polyketide synthase pksA. PksA combines a hexanoyl starter unit and 7 malonyl-CoA extender units to synthesize the precursor NOR. The hexanoyl starter unit is provided to the acyl-carrier protein (ACP) domain by the fungal fatty acid synthase hexA/hexB. The second step is the conversion of NOR to averantin (AVN) and requires the norsolorinic acid ketoreductase nor1, which catalyzes the dehydration of norsolorinic acid to form (1'S)-averantin. The cytochrome P450 monooxygenase avnA then catalyzes the hydroxylation of AVN to 5'hydroxyaverantin (HAVN). The next step is performed by adhA that transforms HAVN to averufin (AVF). Averufin might then be converted to hydroxyversicolorone by cypX and avfA. Hydroxyversicolorone is further converted versiconal hemiacetal acetate (VHA) by moxY. VHA is then the substrate for the versiconal hemiacetal acetate esterase est1 to yield versiconal (VAL). Versicolorin B synthase vbsA then converts VAL to versicolorin B (VERB) by closing the bisfuran ring. Then, the activity of the versicolorin B desaturase verB leads to versicolorin A (VERA). DotB, a predicted chloroperoxidase, may perform epoxidation of the A-ring of VERA. Alternatively, a cytochrome P450, such as cypX or avnA could catalyze this step. It is also possible that another, uncharacterized, cytochrome P450 enzyme is responsible for this step. Opening of the epoxide could potentially be achieved by the epoxide hydrolase epoA. However, epoA seems not to be required for DOTH biosynthesis, but other epoxide hydrolases may have the ability to complement this hydrolysis. Alternatively, opening of the epoxide ring could be achieved non-enzymatically. The next step is the deoxygenation of ring A to yield the 5,8-dihydroxyanthraquinone which is most likely catalyzed by the NADPH dehydrogenase encoded by ver1. The last stages of DOTH biosynthesis are proposed to involve hydroxylation of the bisfuran. OrdB and norB might have oxidative roles here. An alternative possibility is that cytochrome P450 monoogenases such as avnA and cypX might perform these steps in addition to previously proposed steps. In Dothistroma septosporum (Red band needle blight fungus), this protein is Fatty acid synthase alpha subunit hexA.